An 892-amino-acid polypeptide reads, in one-letter code: Alanine--tRNA ligase (892 aa).

Zn(2+) contacts are provided by His596, His600, Cys700, and His704.

It belongs to the class-II aminoacyl-tRNA synthetase family. Zn(2+) serves as cofactor.

It is found in the cytoplasm. The catalysed reaction is tRNA(Ala) + L-alanine + ATP = L-alanyl-tRNA(Ala) + AMP + diphosphate. Functionally, catalyzes the attachment of alanine to tRNA(Ala) in a two-step reaction: alanine is first activated by ATP to form Ala-AMP and then transferred to the acceptor end of tRNA(Ala). Also edits incorrectly charged Ser-tRNA(Ala) and Gly-tRNA(Ala) via its editing domain. In Methanococcus vannielii (strain ATCC 35089 / DSM 1224 / JCM 13029 / OCM 148 / SB), this protein is Alanine--tRNA ligase.